Consider the following 246-residue polypeptide: UPF0246 protein stu1967 (246 aa).

It belongs to the UPF0246 family.

This is UPF0246 protein stu1967 from Streptococcus thermophilus (strain ATCC BAA-250 / LMG 18311).